The following is a 219-amino-acid chain: Thiamine-phosphate synthase (219 aa).

4-amino-2-methyl-5-(diphosphooxymethyl)pyrimidine contacts are provided by residues 48 to 52 (QFRQK) and Asn-84. Mg(2+) is bound by residues Asp-85 and Asp-104. Residue Ser-123 coordinates 4-amino-2-methyl-5-(diphosphooxymethyl)pyrimidine. 150–152 (TPS) contributes to the 2-[(2R,5Z)-2-carboxy-4-methylthiazol-5(2H)-ylidene]ethyl phosphate binding site. 4-amino-2-methyl-5-(diphosphooxymethyl)pyrimidine is bound at residue Lys-153. Residues Gly-181 and 199 to 200 (IS) contribute to the 2-[(2R,5Z)-2-carboxy-4-methylthiazol-5(2H)-ylidene]ethyl phosphate site.

The protein belongs to the thiamine-phosphate synthase family. The cofactor is Mg(2+).

It catalyses the reaction 2-[(2R,5Z)-2-carboxy-4-methylthiazol-5(2H)-ylidene]ethyl phosphate + 4-amino-2-methyl-5-(diphosphooxymethyl)pyrimidine + 2 H(+) = thiamine phosphate + CO2 + diphosphate. The enzyme catalyses 2-(2-carboxy-4-methylthiazol-5-yl)ethyl phosphate + 4-amino-2-methyl-5-(diphosphooxymethyl)pyrimidine + 2 H(+) = thiamine phosphate + CO2 + diphosphate. The catalysed reaction is 4-methyl-5-(2-phosphooxyethyl)-thiazole + 4-amino-2-methyl-5-(diphosphooxymethyl)pyrimidine + H(+) = thiamine phosphate + diphosphate. It functions in the pathway cofactor biosynthesis; thiamine diphosphate biosynthesis; thiamine phosphate from 4-amino-2-methyl-5-diphosphomethylpyrimidine and 4-methyl-5-(2-phosphoethyl)-thiazole: step 1/1. Condenses 4-methyl-5-(beta-hydroxyethyl)thiazole monophosphate (THZ-P) and 2-methyl-4-amino-5-hydroxymethyl pyrimidine pyrophosphate (HMP-PP) to form thiamine monophosphate (TMP). This is Thiamine-phosphate synthase from Helicobacter pylori (strain HPAG1).